We begin with the raw amino-acid sequence, 187 residues long: Adenylate kinase (187 aa).

12–17 (GAGKGT) provides a ligand contact to ATP. Residues 32-61 (STGDIFRANLAENTELGQKARQFMDAGDLV) form an NMP region. Residues threonine 33, arginine 38, 59-61 (DLV), 87-90 (GYPR), and glutamine 94 each bind AMP. The LID stretch occupies residues 128-134 (GRGRADD). An ATP-binding site is contributed by arginine 129. Arginine 131 and arginine 142 together coordinate AMP. Arginine 170 contributes to the ATP binding site.

The protein belongs to the adenylate kinase family. In terms of assembly, monomer.

The protein localises to the cytoplasm. The catalysed reaction is AMP + ATP = 2 ADP. It functions in the pathway purine metabolism; AMP biosynthesis via salvage pathway; AMP from ADP: step 1/1. Functionally, catalyzes the reversible transfer of the terminal phosphate group between ATP and AMP. Plays an important role in cellular energy homeostasis and in adenine nucleotide metabolism. In Leuconostoc mesenteroides subsp. mesenteroides (strain ATCC 8293 / DSM 20343 / BCRC 11652 / CCM 1803 / JCM 6124 / NCDO 523 / NBRC 100496 / NCIMB 8023 / NCTC 12954 / NRRL B-1118 / 37Y), this protein is Adenylate kinase.